Consider the following 241-residue polypeptide: DNA repair protein RecO (241 aa).

This sequence belongs to the RecO family.

Functionally, involved in DNA repair and RecF pathway recombination. This chain is DNA repair protein RecO, found in Ruegeria sp. (strain TM1040) (Silicibacter sp.).